The following is a 158-amino-acid chain: MNMDWALFLTFLAACGAPATTGALLKPDEWYDNLNKPWWNPPRWVFPLAWTSLYFLMSLAAMRVAQLEGSGQALAFYAAQLAFNTLWTPVFFGMKRMATALAVVMVMWLFVAATMWAFFQLDTWAGVLFVPYLIWATAATGLNFEAMRLNWNRPEARA.

5 helical membrane-spanning segments follow: residues 5–25, 44–65, 73–93, 97–119, and 124–144; these read WALF…GALL, WVFP…MRVA, ALAF…VFFG, MATA…WAFF, and WAGV…GLNF.

This sequence belongs to the TspO/BZRP family. Homodimer.

It is found in the membrane. It localises to the cell inner membrane. May play a role in the transmembrane transport of tetrapyrroles and similar compounds, and thereby contribute to the regulation of tetrapyrrole biosynthesis. Binds tetrapyrroles and promotes the photooxidative degradation of protoporphyrin IX. Binds protoporphyrin IX, hemin, and coproporphyrin III, but does not bind delta-aminolevulinic acid. Can bind bilirubin, curcumin, gossypol, retinoic acid, cholesterol and the benzodiazepine receptor agonist PK-11195 (in vitro). Plays a role in the response to low oxygen levels and in the regulation of the biosynthesis of photosynthetic pigments. This chain is Tryptophan-rich sensory protein, found in Cereibacter sphaeroides (Rhodobacter sphaeroides).